We begin with the raw amino-acid sequence, 247 residues long: Probable transcriptional regulatory protein lpl1249 (247 aa).

The protein belongs to the TACO1 family.

Its subcellular location is the cytoplasm. The polypeptide is Probable transcriptional regulatory protein lpl1249 (Legionella pneumophila (strain Lens)).